Reading from the N-terminus, the 378-residue chain is Zinc transporter 7 (378 aa).

The Cytoplasmic portion of the chain corresponds to Met-1–Asn-37. A helical transmembrane segment spans residues Leu-38–Trp-58. Over Ser-59–Asp-67 the chain is Lumenal. A helical transmembrane segment spans residues Ser-68–Ser-88. Topologically, residues Lys-89–Arg-102 are cytoplasmic. A helical transmembrane segment spans residues Ala-103–Phe-123. Residues Ser-124–Arg-140 are Lumenal-facing. The chain crosses the membrane as a helical span at residues Leu-141–His-161. The tract at residues His-161–His-220 is his-rich loop. Over Gly-162–Gly-238 the chain is Cytoplasmic. The segment covering Ser-186–Pro-223 has biased composition (basic and acidic residues). The tract at residues Ser-186–Ser-224 is disordered. Residues Val-239–Met-259 form a helical membrane-spanning segment. Residues Met-260 to Gly-264 are Lumenal-facing. The chain crosses the membrane as a helical span at residues Leu-265 to Ile-285. Residues Pro-286–Met-378 lie on the Cytoplasmic side of the membrane.

Belongs to the cation diffusion facilitator (CDF) transporter (TC 2.A.4) family. SLC30A subfamily. As to quaternary structure, homooligomer. As to expression, highly expressed in liver, spleen, duodenum and part of the jejunum of small intestine (at protein level). Moderately expressed in kidney, lung, and brain. Barely detectable in heart. In brain, expressed in cerebellum, cerebral cortex and hippocampus (at protein level).

The protein resides in the golgi apparatus membrane. The protein localises to the cytoplasmic vesicle. It is found in the golgi apparatus. It localises to the trans-Golgi network. Its subcellular location is the sarcoplasmic reticulum. The protein resides in the mitochondrion. The catalysed reaction is Zn(2+)(in) = Zn(2+)(out). Its function is as follows. Zinc ion transporter mediating zinc entry from the cytosol into the lumen of organelles along the secretory pathway. By contributing to zinc ion homeostasis within the early secretory pathway, regulates the activation and folding of enzymes like alkaline phosphatases. The polypeptide is Zinc transporter 7 (Mus musculus (Mouse)).